The chain runs to 316 residues: Retron Ec73 putative ribosyltransferase/DNA-binding protein (316 aa).

Functionally, possible ribosyltransferase/DNA-binding component of antiviral defense system retron Ec73, composed of a non-coding RNA (ncRNA) followed by this protein then a reverse transcriptase (RT). Expression of this retron confers protection against bacteriophages SECphi4, SECphi6, SECphi27 and P1. At multiplicity of infection (MOI) of 0.02 cultures grow normally when infected with SECphi4 without collapsing, at MOI 2 cultures enter growth stasis. The polypeptide is Retron Ec73 putative ribosyltransferase/DNA-binding protein (Escherichia coli).